The following is a 542-amino-acid chain: Protein OS-9 homolog (542 aa).

Residues 1–21 form the signal peptide; sequence MQAKIIYALSAISALIPLGSS. Residues asparagine 52 and asparagine 74 are each glycosylated (N-linked (GlcNAc...) asparagine). Cystine bridges form between cysteine 70–cysteine 258, cysteine 117–cysteine 130, cysteine 193–cysteine 227, and cysteine 208–cysteine 239. The MRH domain maps to 115 to 241; the sequence is ERCIFYQAGF…QVTIPELCNL (127 aa). A mannooligosaccharide derivative is bound by residues tryptophan 125, glutamine 137, aspartate 194, arginine 200, glutamate 223, and tyrosine 229. Asparagine 380 is a glycosylation site (N-linked (GlcNAc...) asparagine). A disordered region spans residues 497 to 528; sequence NARMDDDESTSHTTRDIGEAGSQTTGNTESEV. The span at 505–514 shows a compositional bias: basic and acidic residues; the sequence is STSHTTRDIG. Over residues 517-528 the composition is skewed to polar residues; sequence GSQTTGNTESEV. A Prevents secretion from ER motif is present at residues 539–542; sequence HDEL.

It belongs to the OS-9 family. As to quaternary structure, homodimer. Component of the HRD1 ubiquitin ligase complex which contains the E3 ligase HRD1, its cofactors HRD3, USA1 and DER1, substrate recruiting factor YOS9 and CDC48-binding protein UBX2. Within the complex, interacts (via N-terminus) with HRD3. In ERAD-L, HRD3 and YOS9 jointly bind misfolded glycoproteins in the endoplasmic reticulum (ER) lumen. Movement of ERAD-L substrates through the ER membrane is facilitated by HRD1 and DER1 which have lateral gates facing each other and which distort the membrane region between the lateral gates, making it much thinner than a normal phospholipid bilayer. Substrates insert into the membrane as a hairpin loop with one strand interacting with DER1 and the other with HRD1. The HRD1 complex interacts with the heterotrimeric CDC48-NPL4-UFD1 ATPase complex which is recruited by UBX2 via its interaction with CDC48 and which moves ubiquitinated substrates to the cytosol for targeting to the proteasome. Interacts with KAR2 and EMP47. Interacts with misfolded ER lumenal proteins like PCR1. Interacts with the GPI-anchored proteins GAS1 and MKC7.

Its subcellular location is the endoplasmic reticulum membrane. Functionally, lectin involved in the quality control of the secretory pathway. As a member of the endoplasmic reticulum-associated degradation lumenal (ERAD-L) surveillance system, targets misfolded endoplasmic reticulum lumenal glycoproteins for degradation. The recognition of targets is N-glycan specific. Functions in recruiting misfolded protein substrates in conjunction with HRD3. The protein is Protein OS-9 homolog (YOS9) of Saccharomyces cerevisiae (strain ATCC 204508 / S288c) (Baker's yeast).